The sequence spans 131 residues: Protein NEGATIVE REGULATOR OF RESISTANCE (131 aa).

Disordered stretches follow at residues 1–33 and 51–131; these read MDAT…DEVS and TRRL…RAPA. The short motif at 12 to 15 is the Nuclear localization signal element; that stretch reads KRKR. Positions 116 to 131 are enriched in low complexity; sequence PPSDAPATPRSARAPA.

Belongs to the NPR1-interactor family. Interacts with NPR1/NH1. Interacts with NPR2/NH2.

It is found in the nucleus. In terms of biological role, acts as a negative regulator of disease resistance. Acts on basal resistance, age-related resistance and resistance mediated by the LRR receptor kinase XA21. Plants over-expressing NRR display enhanced susceptibility to the bacterial blight Xanthomonas oryzae pv. oryzae (Xoo). The chain is Protein NEGATIVE REGULATOR OF RESISTANCE from Oryza sativa subsp. indica (Rice).